A 168-amino-acid chain; its full sequence is Transcription elongation factor GreB (168 aa).

It belongs to the GreA/GreB family. GreB subfamily.

Its function is as follows. Necessary for efficient RNA polymerase transcription elongation past template-encoded arresting sites. The arresting sites in DNA have the property of trapping a certain fraction of elongating RNA polymerases that pass through, resulting in locked ternary complexes. Cleavage of the nascent transcript by cleavage factors such as GreA or GreB allows the resumption of elongation from the new 3'terminus. GreB releases sequences of up to 9 nucleotides in length. This is Transcription elongation factor GreB from Xanthomonas axonopodis pv. citri (strain 306).